The sequence spans 579 residues: CTP synthase 1 (579 aa).

A Glutamine amidotransferase type-1 domain is found at 305 to 559 (KIALVGKYTN…LGLVAASAGI (255 aa)). Residue Cys-404 is the For GATase activity of the active site. Lys-422 participates in a covalent cross-link: Glycyl lysine isopeptide (Lys-Gly) (interchain with G-Cter in ubiquitin). Active-site for GATase activity residues include His-535 and Glu-537.

This sequence belongs to the CTP synthase family. Homodimer. Oligomerizes to a tetramer in the presence of its substrates UTP and ATP.

It carries out the reaction UTP + L-glutamine + ATP + H2O = CTP + L-glutamate + ADP + phosphate + 2 H(+). Its pathway is pyrimidine metabolism; CTP biosynthesis via de novo pathway; CTP from UDP: step 2/2. Its activity is regulated as follows. Activated by GTP and inhibited by CTP. Catalyzes the ATP-dependent amination of UTP to CTP with either L-glutamine or ammonia as the source of nitrogen. The sequence is that of CTP synthase 1 (URA7) from Saccharomyces cerevisiae (strain ATCC 204508 / S288c) (Baker's yeast).